The chain runs to 274 residues: Nitrogenase iron protein (274 aa).

Glycine 8–serine 15 provides a ligand contact to ATP. Cysteine 94 serves as a coordination point for [4Fe-4S] cluster. Arginine 97 carries the ADP-ribosylarginine; by dinitrogenase reductase ADP-ribosyltransferase modification. Cysteine 131 contacts [4Fe-4S] cluster.

This sequence belongs to the NifH/BchL/ChlL family. In terms of assembly, homodimer. The cofactor is [4Fe-4S] cluster. Post-translationally, the reversible ADP-ribosylation of Arg-97 inactivates the nitrogenase reductase and regulates nitrogenase activity.

It carries out the reaction N2 + 8 reduced [2Fe-2S]-[ferredoxin] + 16 ATP + 16 H2O = H2 + 8 oxidized [2Fe-2S]-[ferredoxin] + 2 NH4(+) + 16 ADP + 16 phosphate + 6 H(+). The key enzymatic reactions in nitrogen fixation are catalyzed by the nitrogenase complex, which has 2 components: the iron protein and the molybdenum-iron protein. This chain is Nitrogenase iron protein, found in Dehalococcoides mccartyi (strain ATCC BAA-2266 / KCTC 15142 / 195) (Dehalococcoides ethenogenes (strain 195)).